Reading from the N-terminus, the 592-residue chain is 1,4-alpha-glucan branching enzyme GlgB 2 (592 aa).

D274 serves as the catalytic Nucleophile. The Proton donor role is filled by E327.

Belongs to the glycosyl hydrolase 13 family. GlgB subfamily. Monomer.

It catalyses the reaction Transfers a segment of a (1-&gt;4)-alpha-D-glucan chain to a primary hydroxy group in a similar glucan chain.. The protein operates within glycan biosynthesis; glycogen biosynthesis. Catalyzes the formation of the alpha-1,6-glucosidic linkages in glycogen by scission of a 1,4-alpha-linked oligosaccharide from growing alpha-1,4-glucan chains and the subsequent attachment of the oligosaccharide to the alpha-1,6 position. In Streptomyces avermitilis (strain ATCC 31267 / DSM 46492 / JCM 5070 / NBRC 14893 / NCIMB 12804 / NRRL 8165 / MA-4680), this protein is 1,4-alpha-glucan branching enzyme GlgB 2.